Reading from the N-terminus, the 276-residue chain is Expansin-like A3 (276 aa).

An N-terminal signal peptide occupies residues 1 to 28; sequence MAVLLSILSSSFLLLLAASSSSTPRASA. In terms of domain architecture, Expansin-like EG45 spans 52–158; the sequence is GGGCGYGAMA…RRIPCDYKDK (107 aa). N-linked (GlcNAc...) asparagine glycans are attached at residues asparagine 115 and asparagine 159. In terms of domain architecture, Expansin-like CBD spans 172–255; it reads NNLVIKFLYQ…NWQPGQVYDT (84 aa).

This sequence belongs to the expansin family. Expansin-like A subfamily.

The protein resides in the secreted. The polypeptide is Expansin-like A3 (EXLA3) (Oryza sativa subsp. japonica (Rice)).